The chain runs to 245 residues: Phosphoadenosine 5'-phosphosulfate reductase (245 aa).

Residue C239 is the Nucleophile; cysteine thiosulfonate intermediate of the active site.

Belongs to the PAPS reductase family. CysH subfamily.

The protein resides in the cytoplasm. It carries out the reaction [thioredoxin]-disulfide + sulfite + adenosine 3',5'-bisphosphate + 2 H(+) = [thioredoxin]-dithiol + 3'-phosphoadenylyl sulfate. It participates in sulfur metabolism; hydrogen sulfide biosynthesis; sulfite from sulfate: step 3/3. In terms of biological role, catalyzes the formation of sulfite from phosphoadenosine 5'-phosphosulfate (PAPS) using thioredoxin as an electron donor. The protein is Phosphoadenosine 5'-phosphosulfate reductase of Alkalilimnicola ehrlichii (strain ATCC BAA-1101 / DSM 17681 / MLHE-1).